A 539-amino-acid polypeptide reads, in one-letter code: Phosphoenolpyruvate carboxykinase (ATP) (539 aa).

Substrate contacts are provided by Arg61, Tyr195, and Lys201. ATP contacts are provided by residues Lys201, His220, and 238 to 246; that span reads GLSGTGKTT. Mn(2+)-binding residues include Lys201 and His220. Asp259 contacts Mn(2+). The ATP site is built by Glu287, Arg325, and Thr450. Arg325 serves as a coordination point for substrate.

It belongs to the phosphoenolpyruvate carboxykinase (ATP) family. Mn(2+) is required as a cofactor.

It is found in the cytoplasm. It carries out the reaction oxaloacetate + ATP = phosphoenolpyruvate + ADP + CO2. The protein operates within carbohydrate biosynthesis; gluconeogenesis. Its function is as follows. Involved in the gluconeogenesis. Catalyzes the conversion of oxaloacetate (OAA) to phosphoenolpyruvate (PEP) through direct phosphoryl transfer between the nucleoside triphosphate and OAA. The protein is Phosphoenolpyruvate carboxykinase (ATP) of Methylorubrum populi (strain ATCC BAA-705 / NCIMB 13946 / BJ001) (Methylobacterium populi).